Reading from the N-terminus, the 182-residue chain is Large ribosomal subunit protein bL25 (182 aa).

Belongs to the bacterial ribosomal protein bL25 family. CTC subfamily. As to quaternary structure, part of the 50S ribosomal subunit; part of the 5S rRNA/L5/L18/L25 subcomplex. Contacts the 5S rRNA. Binds to the 5S rRNA independently of L5 and L18.

Its function is as follows. This is one of the proteins that binds to the 5S RNA in the ribosome where it forms part of the central protuberance. This chain is Large ribosomal subunit protein bL25, found in Borrelia duttonii (strain Ly).